We begin with the raw amino-acid sequence, 491 residues long: Aspartyl/glutamyl-tRNA(Asn/Gln) amidotransferase subunit B (491 aa).

Belongs to the GatB/GatE family. GatB subfamily. As to quaternary structure, heterotrimer of A, B and C subunits.

It catalyses the reaction L-glutamyl-tRNA(Gln) + L-glutamine + ATP + H2O = L-glutaminyl-tRNA(Gln) + L-glutamate + ADP + phosphate + H(+). The enzyme catalyses L-aspartyl-tRNA(Asn) + L-glutamine + ATP + H2O = L-asparaginyl-tRNA(Asn) + L-glutamate + ADP + phosphate + 2 H(+). In terms of biological role, allows the formation of correctly charged Asn-tRNA(Asn) or Gln-tRNA(Gln) through the transamidation of misacylated Asp-tRNA(Asn) or Glu-tRNA(Gln) in organisms which lack either or both of asparaginyl-tRNA or glutaminyl-tRNA synthetases. The reaction takes place in the presence of glutamine and ATP through an activated phospho-Asp-tRNA(Asn) or phospho-Glu-tRNA(Gln). The chain is Aspartyl/glutamyl-tRNA(Asn/Gln) amidotransferase subunit B from Burkholderia cenocepacia (strain ATCC BAA-245 / DSM 16553 / LMG 16656 / NCTC 13227 / J2315 / CF5610) (Burkholderia cepacia (strain J2315)).